Reading from the N-terminus, the 450-residue chain is Tubulin alpha-4 chain (450 aa).

Q11 is a GTP binding site. K40 carries the post-translational modification N6-acetyllysine. GTP-binding residues include E71, G144, T145, T179, N206, and N228. A Mg(2+)-binding site is contributed by E71. Residue E254 is part of the active site. Residues 431 to 450 (DYEEVGAESGEGDEGDEEEY) form a disordered region.

Belongs to the tubulin family. As to quaternary structure, dimer of alpha and beta chains. A typical microtubule is a hollow water-filled tube with an outer diameter of 25 nm and an inner diameter of 15 nM. Alpha-beta heterodimers associate head-to-tail to form protofilaments running lengthwise along the microtubule wall with the beta-tubulin subunit facing the microtubule plus end conferring a structural polarity. Microtubules usually have 13 protofilaments but different protofilament numbers can be found in some organisms and specialized cells. Mg(2+) serves as cofactor. Post-translationally, undergoes a tyrosination/detyrosination cycle, the cyclic removal and re-addition of a C-terminal tyrosine residue by the enzymes tubulin tyrosine carboxypeptidase (TTCP) and tubulin tyrosine ligase (TTL), respectively. Acetylation of alpha chains at Lys-40 stabilizes microtubules and affects affinity and processivity of microtubule motors. This modification has a role in multiple cellular functions, ranging from cell motility, cell cycle progression or cell differentiation to intracellular trafficking and signaling.

The protein localises to the cytoplasm. The protein resides in the cytoskeleton. The catalysed reaction is GTP + H2O = GDP + phosphate + H(+). Functionally, tubulin is the major constituent of microtubules, a cylinder consisting of laterally associated linear protofilaments composed of alpha- and beta-tubulin heterodimers. Microtubules grow by the addition of GTP-tubulin dimers to the microtubule end, where a stabilizing cap forms. Below the cap, tubulin dimers are in GDP-bound state, owing to GTPase activity of alpha-tubulin. This Gossypium hirsutum (Upland cotton) protein is Tubulin alpha-4 chain.